The following is a 225-amino-acid chain: Ribonuclease 3 (225 aa).

The 123-residue stretch at 5–127 (LERLQRQIGY…IIGAISLDSD (123 aa)) folds into the RNase III domain. Residue Glu40 coordinates Mg(2+). Asp44 is an active-site residue. Residues Asp113 and Glu116 each contribute to the Mg(2+) site. Glu116 is a catalytic residue. One can recognise a DRBM domain in the interval 154 to 224 (DPKTRLQEYL…AEKILQLLEM (71 aa)).

The protein belongs to the ribonuclease III family. As to quaternary structure, homodimer. Requires Mg(2+) as cofactor.

Its subcellular location is the cytoplasm. The enzyme catalyses Endonucleolytic cleavage to 5'-phosphomonoester.. In terms of biological role, digests double-stranded RNA. Involved in the processing of primary rRNA transcript to yield the immediate precursors to the large and small rRNAs (23S and 16S). Also processes some mRNAs, and tRNAs when they are encoded in the rRNA operon. CRISPR (clustered regularly interspaced short palindromic repeat) is an adaptive immune system that provides protection against mobile genetic elements (viruses, transposable elements and conjugative plasmids). CRISPR clusters contain spacers, sequences complementary to antecedent mobile elements, and target invading nucleic acids. CRISPR clusters are transcribed and processed into CRISPR RNA (crRNA). In this organism endogenous ribonuclease 3 and Cas9 are required for correct coprocessing of pre-crRNA and the trans-encoded small RNA (tracrRNA). Cas9, crRNA and tracrRNA are required for cleavage of invading DNA. Complements pre-crRNA and tracrRNA coprocessing defects in an rnc deletion in S.pyogenes strain 370. This chain is Ribonuclease 3, found in Pasteurella multocida (strain Pm70).